Here is a 266-residue protein sequence, read N- to C-terminus: 3-methyl-2-oxobutanoate hydroxymethyltransferase (266 aa).

Mg(2+)-binding residues include aspartate 43 and aspartate 82. 3-methyl-2-oxobutanoate is bound by residues 43-44 (DS), aspartate 82, and lysine 110. Position 112 (glutamate 112) interacts with Mg(2+). Residue glutamate 179 is the Proton acceptor of the active site.

The protein belongs to the PanB family. As to quaternary structure, homodecamer; pentamer of dimers. The cofactor is Mg(2+).

It localises to the cytoplasm. The catalysed reaction is 3-methyl-2-oxobutanoate + (6R)-5,10-methylene-5,6,7,8-tetrahydrofolate + H2O = 2-dehydropantoate + (6S)-5,6,7,8-tetrahydrofolate. The protein operates within cofactor biosynthesis; (R)-pantothenate biosynthesis; (R)-pantoate from 3-methyl-2-oxobutanoate: step 1/2. Its function is as follows. Catalyzes the reversible reaction in which hydroxymethyl group from 5,10-methylenetetrahydrofolate is transferred onto alpha-ketoisovalerate to form ketopantoate. The protein is 3-methyl-2-oxobutanoate hydroxymethyltransferase of Psychrobacter cryohalolentis (strain ATCC BAA-1226 / DSM 17306 / VKM B-2378 / K5).